The following is a 260-amino-acid chain: Coiled-coil domain-containing protein 127 (260 aa).

Positions 76–139 form a coiled coil; it reads AVISEHRRAV…EKSRLQPLRN (64 aa).

The protein is Coiled-coil domain-containing protein 127 (Ccdc127) of Mus musculus (Mouse).